The primary structure comprises 223 residues: 7-carboxy-7-deazaguanine synthase (223 aa).

Substrate contacts are provided by residues 12-14 (LQG) and arginine 27. The Radical SAM core domain occupies 18 to 223 (FTGVPAIFIR…MQTHKYLNIA (206 aa)). [4Fe-4S] cluster is bound by residues cysteine 31, cysteine 35, and cysteine 38. Threonine 40 contributes to the Mg(2+) binding site. Threonine 92 lines the substrate pocket. S-adenosyl-L-methionine contacts are provided by residues glycine 94 and 136-138 (SPK).

This sequence belongs to the radical SAM superfamily. 7-carboxy-7-deazaguanine synthase family. In terms of assembly, homodimer. Requires [4Fe-4S] cluster as cofactor. It depends on S-adenosyl-L-methionine as a cofactor. The cofactor is Mg(2+).

The enzyme catalyses 6-carboxy-5,6,7,8-tetrahydropterin + H(+) = 7-carboxy-7-deazaguanine + NH4(+). It functions in the pathway purine metabolism; 7-cyano-7-deazaguanine biosynthesis. Functionally, catalyzes the complex heterocyclic radical-mediated conversion of 6-carboxy-5,6,7,8-tetrahydropterin (CPH4) to 7-carboxy-7-deazaguanine (CDG), a step common to the biosynthetic pathways of all 7-deazapurine-containing compounds. This is 7-carboxy-7-deazaguanine synthase from Escherichia coli (strain K12).